Consider the following 739-residue polypeptide: Phosphoribosylformylglycinamidine synthase subunit PurL (739 aa).

The active site involves histidine 53. Tyrosine 56 and lysine 95 together coordinate ATP. Residue glutamate 97 coordinates Mg(2+). Residues 98 to 101 (SHNH) and arginine 120 contribute to the substrate site. Histidine 99 (proton acceptor) is an active-site residue. Aspartate 121 lines the Mg(2+) pocket. Position 244 (glutamine 244) interacts with substrate. Aspartate 274 lines the Mg(2+) pocket. 318 to 320 (ESQ) lines the substrate pocket. ATP-binding residues include aspartate 501 and glycine 538. Asparagine 539 is a binding site for Mg(2+). Residue serine 541 participates in substrate binding.

The protein belongs to the FGAMS family. In terms of assembly, monomer. Part of the FGAM synthase complex composed of 1 PurL, 1 PurQ and 2 PurS subunits.

Its subcellular location is the cytoplasm. The catalysed reaction is N(2)-formyl-N(1)-(5-phospho-beta-D-ribosyl)glycinamide + L-glutamine + ATP + H2O = 2-formamido-N(1)-(5-O-phospho-beta-D-ribosyl)acetamidine + L-glutamate + ADP + phosphate + H(+). It functions in the pathway purine metabolism; IMP biosynthesis via de novo pathway; 5-amino-1-(5-phospho-D-ribosyl)imidazole from N(2)-formyl-N(1)-(5-phospho-D-ribosyl)glycinamide: step 1/2. Functionally, part of the phosphoribosylformylglycinamidine synthase complex involved in the purines biosynthetic pathway. Catalyzes the ATP-dependent conversion of formylglycinamide ribonucleotide (FGAR) and glutamine to yield formylglycinamidine ribonucleotide (FGAM) and glutamate. The FGAM synthase complex is composed of three subunits. PurQ produces an ammonia molecule by converting glutamine to glutamate. PurL transfers the ammonia molecule to FGAR to form FGAM in an ATP-dependent manner. PurS interacts with PurQ and PurL and is thought to assist in the transfer of the ammonia molecule from PurQ to PurL. The chain is Phosphoribosylformylglycinamidine synthase subunit PurL from Listeria monocytogenes serotype 4b (strain CLIP80459).